We begin with the raw amino-acid sequence, 614 residues long: Elongation factor 4 (614 aa).

The tr-type G domain occupies 10–192 (ALIRNFCIIA…EIVARIPPPV (183 aa)). Residues 22-27 (DHGKST) and 139-142 (NKID) each bind GTP.

Belongs to the TRAFAC class translation factor GTPase superfamily. Classic translation factor GTPase family. LepA subfamily.

The protein localises to the cell membrane. The enzyme catalyses GTP + H2O = GDP + phosphate + H(+). Its function is as follows. Required for accurate and efficient protein synthesis under certain stress conditions. May act as a fidelity factor of the translation reaction, by catalyzing a one-codon backward translocation of tRNAs on improperly translocated ribosomes. Back-translocation proceeds from a post-translocation (POST) complex to a pre-translocation (PRE) complex, thus giving elongation factor G a second chance to translocate the tRNAs correctly. Binds to ribosomes in a GTP-dependent manner. In Thermobifida fusca (strain YX), this protein is Elongation factor 4.